The chain runs to 416 residues: Lipid III flippase (416 aa).

Over 1-17 the chain is Cytoplasmic; that stretch reads MSLAKASLWTAASTLVK. The helical transmembrane segment at 18 to 38 threads the bilayer; sequence IGAGLLVGKLLAVSFGPAGLG. The Periplasmic portion of the chain corresponds to 39-45; the sequence is LAANFRQ. A helical membrane pass occupies residues 46–66; it reads LITVLGVLAGAGIFNGVTKYV. Residues 67–84 lie on the Cytoplasmic side of the membrane; that stretch reads AQYHDNPQQLRRVVGTSS. The chain crosses the membrane as a helical span at residues 85–105; it reads AMVLGFSTLMALVFVLAAAPI. Residues 106 to 121 are Periplasmic-facing; it reads SQGLFGNTDYQGLVRL. Residues 122 to 142 form a helical membrane-spanning segment; sequence VALVQMGIAWGNLLLALMKGF. Topologically, residues 143–144 are cytoplasmic; that stretch reads RD. A helical transmembrane segment spans residues 145 to 165; it reads AAGNALSLIVGSLIGVLAYYV. Residues 166 to 174 are Periplasmic-facing; the sequence is SYRLGGYEG. Residues 175-195 traverse the membrane as a helical segment; it reads ALLGLALIPALVVIPAAIMLI. Topologically, residues 196–216 are cytoplasmic; the sequence is KRGVIPLSYLKPSWDNGLAGQ. The chain crosses the membrane as a helical span at residues 217-237; that stretch reads LSKFTLMALITSVTLPVAYIM. Residues 238–259 lie on the Periplasmic side of the membrane; the sequence is MRKLLAAQYSWDEVGIWQGVSS. Residues 260-280 form a helical membrane-spanning segment; the sequence is ISDAYLQFITASFSVYLLPTL. The Cytoplasmic portion of the chain corresponds to 281–302; that stretch reads SRLTEKRDITREVVKSLKFVLP. A helical transmembrane segment spans residues 303–323; it reads AVAAASFTVWLLRDFAIWLLL. Residues 324 to 334 lie on the Periplasmic side of the membrane; it reads SNKFTAMRDLF. The chain crosses the membrane as a helical span at residues 335–355; sequence AWQLVGDVLKVGAYVFGYLVI. The Cytoplasmic portion of the chain corresponds to 356–370; the sequence is AKASLRFYILAEVSQ. 2 helical membrane-spanning segments follow: residues 371-391 and 392-412; these read FTLL…LGAA and QAYM…FLLW. At 413–416 the chain is on the cytoplasmic side; that stretch reads RRRA.

Belongs to the polysaccharide transport (PST) (TC 2.A.66.2) family. As to quaternary structure, probably part of a complex composed of WzxE, WzyE and WzzE.

The protein resides in the cell inner membrane. The protein operates within bacterial outer membrane biogenesis; enterobacterial common antigen biosynthesis. Its function is as follows. Mediates the transbilayer movement of Und-PP-GlcNAc-ManNAcA-Fuc4NAc (lipid III) from the inner to the outer leaflet of the cytoplasmic membrane during the assembly of enterobacterial common antigen (ECA). Required for the assembly of the phosphoglyceride-linked form of ECA (ECA(PG)) and the water-soluble cyclic form of ECA (ECA(CYC)). Could also mediate the translocation of Und-PP-GlcNAc. In Escherichia coli (strain K12), this protein is Lipid III flippase.